Consider the following 191-residue polypeptide: NF-kappa-B inhibitor-interacting Ras-like protein 2 (191 aa).

Positions 1–191 are small GTPase-like; sequence MGKSCKVVVC…KNKGSGSVDG (191 aa). 11-18 is a GTP binding site; that stretch reads GQAAVGKT. The Effector region signature appears at 35–43; sequence MIETQEDIY. GTP contacts are provided by residues 61-65 and 120-123; these read DTRGL and NKCD. Residues 170–191 form a disordered region; the sequence is QPQSKSAFPLSRKNKGSGSVDG.

It belongs to the small GTPase superfamily. Ras family. KappaB-Ras subfamily.

The protein resides in the cytoplasm. Its function is as follows. Atypical Ras-like protein that acts as a potent regulator of NF-kappa-B activity by preventing the degradation of NF-kappa-B inhibitor beta (NFKBIB) by most signals, explaining why NFKBIB is more resistant to degradation. This chain is NF-kappa-B inhibitor-interacting Ras-like protein 2 (NKIRAS2), found in Gallus gallus (Chicken).